Reading from the N-terminus, the 348-residue chain is Ubiquitin thioesterase OTU1 (348 aa).

The segment covering 1-11 (MFGPAKGRHFG) has biased composition (basic residues). The disordered stretch occupies residues 1-39 (MFGPAKGRHFGVHPAPGFPGGVSQQAAGTKAGPAGAWPV). The interval 50-128 (RCKAKDGTHV…IIEEDQTRPR (79 aa)) is UBX-like. Positions 149–274 (LTRTVVPADN…GIHYDPLQRN (126 aa)) constitute an OTU domain. The tract at residues 154–160 (VPADNSC) is cys-loop. The active site involves Asp-157. Cys-160 functions as the Nucleophile in the catalytic mechanism. Residues 213 to 223 (IKRDDTWGGAI) are variable-loop. Residues 263-267 (YDGIH) form a his-loop region. Residue Ile-266 coordinates substrate. The active site involves His-267. The interval 291–296 (DIVLVQ) is S2 site. The C2H2-type zinc finger occupies 318–342 (LRCMVCQKGLTGQAEAREHAKETGH). The active site involves His-342.

Interacts with VCP; the interaction is direct. Interacts with FAF2/UBXD8. Interacts with DERL1; however interaction is dependent on the UBAX-like region, suggesting that it may be indirect. Interacts with PLAA, UBXN6 and VCP; may form a complex involved in macroautophagy.

The protein localises to the cytoplasm. The catalysed reaction is Thiol-dependent hydrolysis of ester, thioester, amide, peptide and isopeptide bonds formed by the C-terminal Gly of ubiquitin (a 76-residue protein attached to proteins as an intracellular targeting signal).. Hydrolase that can remove conjugated ubiquitin from proteins and participates in endoplasmic reticulum-associated degradation (ERAD) for misfolded lumenal proteins. May act by triming the ubiquitin chain on the associated substrate to facilitate their threading through the VCP/p97 pore. Ubiquitin moieties on substrates may present a steric impediment to the threading process when the substrate is transferred to the VCP pore and threaded through VCP's axial channel. Mediates deubiquitination of 'Lys-27'-, 'Lys-29'- and 'Lys-33'-linked polyubiquitin chains. Also able to hydrolyze 'Lys-11'-linked ubiquitin chains. Cleaves both polyubiquitin and di-ubiquitin. May play a role in macroautophagy, regulating for instance the clearance of damaged lysosomes. May recruit PLAA, UBXN6 and VCP to damaged lysosome membranes decorated with K48-linked ubiquitin chains and remove these chains allowing autophagosome formation. This is Ubiquitin thioesterase OTU1 (YOD1) from Homo sapiens (Human).